Consider the following 786-residue polypeptide: MNDRVLRVLEFNKIKELVKGYAITKSAKEMVLDLKPYDSVYDVKEHLEETKEALDILMRKGNPPFEGLYDVKEAITRAEKGGVLSIEGLLRIGNMLAVTRKLSDFLARKEEEEEHRILEGMREGLIVLRGVESAISKAIVSEDEIADSASDKLYSIRRSLKEKNSSIRDKVNSIVRSNTQYLQDSLYTVRGDRYVIPVKAEYKSQVPGLVHDQSSTGATLFIEPTALVNLNNEIKELMLKERAEIERILAELSVLVYKNIDVIKVNFNIIVELDFIFAKAKYGSDLGGTLPIVNEEGVIDLMDARHPLIPKDKVVSSDIYLGREFSTLLITGPNTGGKTVTLKTTGLIELMGLSGLLIPASENSSISFFEEIFADIGDEQSIEQSLSTFSSHMTNIVRIMEKANNKSFVLFDELGAGTDPTEGAALAISILENLRARGCRIMSTTHYSELKGYALKTENVENASVEFNVETLRPTYRLLIGVPGKSNAFEISRRLGLKDNVIEEAKKVISTESLQFEDLIQSLQEKSIKAENDAREAAILRNDAEKYKNRYKEKFERIESVRDNVYADARREAKQILDSAKEEADAILKNMRDLERMGISSDARRKLEAERGKLRDKISDAEARLQKKKEEQKGEELKKIEVGMEALLPSINQKVIVLSKPDNKGEVQVQAGIMKINVKAKDLRVAKETKEEKKIKKREARLNLRQVDPSIDLRGMDSEEACYTADKYLDDAYVAGRGEVTLVHGKGTGVLRKAINDMLKKHPHVKSHRLGEYGEGGTGVTVVILK.

332–339 (GPNTGGKT) serves as a coordination point for ATP. One can recognise a Smr domain in the interval 711–786 (IDLRGMDSEE…GTGVTVVILK (76 aa)).

This sequence belongs to the DNA mismatch repair MutS family. MutS2 subfamily. In terms of assembly, homodimer. Binds to stalled ribosomes, contacting rRNA.

In terms of biological role, endonuclease that is involved in the suppression of homologous recombination and thus may have a key role in the control of bacterial genetic diversity. Functionally, acts as a ribosome collision sensor, splitting the ribosome into its 2 subunits. Detects stalled/collided 70S ribosomes which it binds and splits by an ATP-hydrolysis driven conformational change. Acts upstream of the ribosome quality control system (RQC), a ribosome-associated complex that mediates the extraction of incompletely synthesized nascent chains from stalled ribosomes and their subsequent degradation. Probably generates substrates for RQC. The sequence is that of Endonuclease MutS2 from Clostridium perfringens (strain 13 / Type A).